Here is a 390-residue protein sequence, read N- to C-terminus: tRNA (guanine(9)-N1)-methyltransferase (390 aa).

A disordered region spans residues 1–72 (MDIDEESYLN…RTAQLAEGYA (72 aa)). Positions 43–59 (ARLEEIKPLKRAAERER) are enriched in basic and acidic residues. The SAM-dependent MTase TRM10-type domain maps to 92–340 (KERKEAQRRI…AVIPIRKYAP (249 aa)). S-adenosyl-L-methionine-binding positions include 246–247 (LS), glycine 266, 270–274 (DRNRH), cysteine 278, leucine 292, and 305–307 (KVL). Aspartate 270 acts as the Proton acceptor in catalysis. The interval 343 to 390 (KTKRAKTETKRNEKEEEEVECTSAEGEEDIGVIEESAEVDPEDVFSNQ) is disordered. Basic and acidic residues predominate over residues 347–356 (AKTETKRNEK). The segment covering 357 to 390 (EEEEVECTSAEGEEDIGVIEESAEVDPEDVFSNQ) has biased composition (acidic residues).

It belongs to the class IV-like SAM-binding methyltransferase superfamily. TRM10 family. In terms of assembly, monomer.

The protein localises to the cytoplasm. Its subcellular location is the nucleus. The enzyme catalyses guanosine(9) in tRNA + S-adenosyl-L-methionine = N(1)-methylguanosine(9) in tRNA + S-adenosyl-L-homocysteine + H(+). Its function is as follows. S-adenosyl-L-methionine-dependent guanine N(1)-methyltransferase that catalyzes the formation of N(1)-methylguanine at position 9 (m1G9) in cytoplasmic tRNA. The polypeptide is tRNA (guanine(9)-N1)-methyltransferase (Cryptococcus neoformans var. neoformans serotype D (strain JEC21 / ATCC MYA-565) (Filobasidiella neoformans)).